Here is a 498-residue protein sequence, read N- to C-terminus: Dynein regulatory complex subunit 5 (498 aa).

Disordered stretches follow at residues 27 to 52 and 200 to 223; these read ALGS…LKTK and MPTP…EPEK. The segment covering 28–47 has biased composition (low complexity); the sequence is LGSSSTGPTSLKTSSTPTPG. LRR repeat units lie at residues 276 to 299, 306 to 327, 333 to 353, 361 to 382, 389 to 409, and 417 to 438; these read CHTL…ILIR, ALEE…AAAK, RLRV…QSLA, NLVF…AIAH, CLSV…TLLS, and TLVS…QLLE.

This sequence belongs to the DRC5 family. As to quaternary structure, component of the nexin-dynein regulatory complex (N-DRC). Interacts with DRC1. Interacts with FBXL13/DRC6, DRC3 and DRC7. In terms of tissue distribution, testis-specific (at protein level).

The protein localises to the cell projection. It localises to the cilium. It is found in the flagellum. The protein resides in the cytoplasm. Its subcellular location is the cytoskeleton. The protein localises to the flagellum axoneme. Component of the nexin-dynein regulatory complex (N-DRC) a key regulator of ciliary/flagellar motility which maintains the alignment and integrity of the distal axoneme and regulates microtubule sliding in motile axonemes. May play a role in the assembly of N-DRC. Required for sperm motility. The polypeptide is Dynein regulatory complex subunit 5 (Tcte1) (Mus musculus (Mouse)).